The sequence spans 44 residues: Photosystem II reaction center protein K (44 aa).

Residues 1–7 (MESLLLA) constitute a propeptide that is removed on maturation. The helical transmembrane segment at 23–43 (LPIIPVFFLLLAFVWQAAIGF) threads the bilayer.

This sequence belongs to the PsbK family. PSII is composed of 1 copy each of membrane proteins PsbA, PsbB, PsbC, PsbD, PsbE, PsbF, PsbH, PsbI, PsbJ, PsbK, PsbL, PsbM, PsbT, PsbX, PsbY, PsbZ, Psb30/Ycf12, at least 3 peripheral proteins of the oxygen-evolving complex and a large number of cofactors. It forms dimeric complexes.

The protein resides in the plastid. It is found in the chloroplast thylakoid membrane. Functionally, one of the components of the core complex of photosystem II (PSII). PSII is a light-driven water:plastoquinone oxidoreductase that uses light energy to abstract electrons from H(2)O, generating O(2) and a proton gradient subsequently used for ATP formation. It consists of a core antenna complex that captures photons, and an electron transfer chain that converts photonic excitation into a charge separation. This is Photosystem II reaction center protein K from Trieres chinensis (Marine centric diatom).